The sequence spans 409 residues: NADH-ubiquinone oxidoreductase chain 4 (409 aa).

13 helical membrane-spanning segments follow: residues 9-29, 44-64, 68-88, 90-110, 125-145, 160-180, 194-214, 221-241, 246-268, 273-295, 305-325, 352-372, and 389-409; these read LYFFFEPVLFFFFMVVFGFVA, SFSFILLIVMSLFILGVVLLS, FMLLLLSEVLVVVCVFFFVPS, VILMYMYFELSMFPILVMILG, IFYAALCSFPFLFVYFKSFFF, VFVLSLSFMMKFPVYFLHLWL, LLAGLLLKLGTAGFLRILGCL, VWIVLAFLGMILASFCCMFQS, LAAYSSITHMSFVLMALVFIIMS, GVILMLAHGYTSTLMFYLVGEFY, YMSSFFGSGMIMALLFAVVFL, FSFWVLFVYFFSAFYYSIYLL, and VGFSVPLVFMMYNIFWMSVFF.

The protein belongs to the complex I subunit 4 family.

It localises to the mitochondrion membrane. It catalyses the reaction a ubiquinone + NADH + 5 H(+)(in) = a ubiquinol + NAD(+) + 4 H(+)(out). In terms of biological role, core subunit of the mitochondrial membrane respiratory chain NADH dehydrogenase (Complex I) that is believed to belong to the minimal assembly required for catalysis. Complex I functions in the transfer of electrons from NADH to the respiratory chain. The immediate electron acceptor for the enzyme is believed to be ubiquinone. The chain is NADH-ubiquinone oxidoreductase chain 4 (ND4) from Ascaris suum (Pig roundworm).